The following is an 872-amino-acid chain: DNA mismatch repair protein MutS (872 aa).

Position 622 to 629 (622 to 629 (GPNMAGKS)) interacts with ATP.

It belongs to the DNA mismatch repair MutS family.

Its function is as follows. This protein is involved in the repair of mismatches in DNA. It is possible that it carries out the mismatch recognition step. This protein has a weak ATPase activity. The polypeptide is DNA mismatch repair protein MutS (Geobacter metallireducens (strain ATCC 53774 / DSM 7210 / GS-15)).